Consider the following 187-residue polypeptide: Putative glutathione-dependent formaldehyde-activating enzyme (187 aa).

The CENP-V/GFA domain occupies 20–166; the sequence is FPGGKLYCHC…FESVGLKTYD (147 aa). Zn(2+) contacts are provided by C27, C29, C48, C50, C53, C95, and C98.

Belongs to the Gfa family. Requires Zn(2+) as cofactor.

The catalysed reaction is S-(hydroxymethyl)glutathione = glutathione + formaldehyde. The protein operates within one-carbon metabolism; formaldehyde degradation; formate from formaldehyde (glutathione route): step 1/3. In terms of biological role, catalyzes the condensation of formaldehyde and glutathione to S-hydroxymethylglutathione. The protein is Putative glutathione-dependent formaldehyde-activating enzyme of Talaromyces marneffei (strain ATCC 18224 / CBS 334.59 / QM 7333) (Penicillium marneffei).